The chain runs to 431 residues: Adenylosuccinate synthetase (431 aa).

Residues 13–19 (GDEGKGK) and 41–43 (GHT) each bind GTP. The active-site Proton acceptor is the aspartate 14. Mg(2+) is bound by residues aspartate 14 and glycine 41. IMP-binding positions include 14–17 (DEGK), 39–42 (NAGH), threonine 130, arginine 144, glutamine 225, threonine 240, and arginine 304. Catalysis depends on histidine 42, which acts as the Proton donor. A substrate-binding site is contributed by 300–306 (ATTHRPR). Residues arginine 306, 332-334 (KLD), and 414-416 (STG) each bind GTP.

The protein belongs to the adenylosuccinate synthetase family. In terms of assembly, homodimer. The cofactor is Mg(2+).

It is found in the cytoplasm. The catalysed reaction is IMP + L-aspartate + GTP = N(6)-(1,2-dicarboxyethyl)-AMP + GDP + phosphate + 2 H(+). It participates in purine metabolism; AMP biosynthesis via de novo pathway; AMP from IMP: step 1/2. Functionally, plays an important role in the de novo pathway of purine nucleotide biosynthesis. Catalyzes the first committed step in the biosynthesis of AMP from IMP. The sequence is that of Adenylosuccinate synthetase from Nitrosococcus oceani (strain ATCC 19707 / BCRC 17464 / JCM 30415 / NCIMB 11848 / C-107).